Reading from the N-terminus, the 110-residue chain is Insulin (110 aa).

A signal peptide spans 1-24; the sequence is MASLAALLPLLALLVLCRLDPAQA. Cystine bridges form between cysteine 31-cysteine 96, cysteine 43-cysteine 109, and cysteine 95-cysteine 100. A propeptide spans 57-87 (c peptide); sequence EVEELQVGQAELGGGPGAGGLQPSALELALQ.

The protein belongs to the insulin family. Heterodimer of a B chain and an A chain linked by two disulfide bonds.

It is found in the secreted. Insulin decreases blood glucose concentration. It increases cell permeability to monosaccharides, amino acids and fatty acids. It accelerates glycolysis, the pentose phosphate cycle, and glycogen synthesis in liver. The protein is Insulin (INS) of Oryctolagus cuniculus (Rabbit).